The primary structure comprises 263 residues: Undecaprenyl-diphosphatase (263 aa).

7 helical membrane passes run 38-58 (RSDF…CLAL), 75-95 (RDYV…GLIV), 108-128 (PVAW…HFAG), 135-155 (VVTW…GVFP), 181-201 (FVFM…LLEM), 217-237 (VAFI…LGYI), and 242-262 (FTVF…WLPA).

This sequence belongs to the UppP family.

The protein resides in the cell inner membrane. It carries out the reaction di-trans,octa-cis-undecaprenyl diphosphate + H2O = di-trans,octa-cis-undecaprenyl phosphate + phosphate + H(+). Functionally, catalyzes the dephosphorylation of undecaprenyl diphosphate (UPP). Confers resistance to bacitracin. The polypeptide is Undecaprenyl-diphosphatase (Xanthomonas campestris pv. campestris (strain 8004)).